The chain runs to 374 residues: Succinyl-diaminopimelate desuccinylase (374 aa).

His66 is a Zn(2+) binding site. The active site involves Asp68. Asp99 serves as a coordination point for Zn(2+). The active-site Proton acceptor is Glu133. Residues Glu134, Glu162, and His348 each contribute to the Zn(2+) site.

This sequence belongs to the peptidase M20A family. DapE subfamily. Homodimer. Zn(2+) serves as cofactor. The cofactor is Co(2+).

It catalyses the reaction N-succinyl-(2S,6S)-2,6-diaminopimelate + H2O = (2S,6S)-2,6-diaminopimelate + succinate. It participates in amino-acid biosynthesis; L-lysine biosynthesis via DAP pathway; LL-2,6-diaminopimelate from (S)-tetrahydrodipicolinate (succinylase route): step 3/3. Functionally, catalyzes the hydrolysis of N-succinyl-L,L-diaminopimelic acid (SDAP), forming succinate and LL-2,6-diaminopimelate (DAP), an intermediate involved in the bacterial biosynthesis of lysine and meso-diaminopimelic acid, an essential component of bacterial cell walls. The polypeptide is Succinyl-diaminopimelate desuccinylase (Coxiella burnetii (strain CbuK_Q154) (Coxiella burnetii (strain Q154))).